The primary structure comprises 81 residues: Ferredoxin (81 aa).

One can recognise a 4Fe-4S ferredoxin-type domain in the interval 2-30 (KYTIVDKETCIACGACGAAAPDIYDYDED). Residues cysteine 11, cysteine 14, cysteine 17, and cysteine 61 each coordinate [4Fe-4S] cluster.

[4Fe-4S] cluster serves as cofactor.

Functionally, ferredoxins are iron-sulfur proteins that transfer electrons in a wide variety of metabolic reactions. In Bacillus thermoproteolyticus, this protein is Ferredoxin.